Here is a 355-residue protein sequence, read N- to C-terminus: Iron deficiency-induced protein A (355 aa).

The tat-type signal signal peptide spans 1–34; that stretch reads MEKVGRRVFLGMGAAATAYVTHHLWNQNAESSYA. Fe cation is bound by residues His-49, Tyr-50, Tyr-180, Tyr-236, and Tyr-237.

This sequence belongs to the bacterial solute-binding protein 1 family. Post-translationally, predicted to be exported by the Tat system. The position of the signal peptide cleavage has not been experimentally proven.

The protein localises to the cellular thylakoid membrane. In terms of biological role, plays an important role in protecting the acceptor side of photosystem II (PSII) against oxidative damage, especially under iron-limiting growth conditions. May also be part of a periplasmic ABC transporter complex involved in iron import. This chain is Iron deficiency-induced protein A (idiA), found in Thermosynechococcus vestitus (strain NIES-2133 / IAM M-273 / BP-1).